Consider the following 180-residue polypeptide: Ribulose bisphosphate carboxylase small subunit, chloroplastic 4 (180 aa).

A chloroplast-targeting transit peptide spans 1–56 (MASSIVSSAAVATRANGAQASMVGPFTGLKSTASFPVSRKQNLDITSIASNGGRVR).

This sequence belongs to the RuBisCO small chain family. Heterohexadecamer of 8 large and 8 small subunits.

The protein resides in the plastid. It localises to the chloroplast. Its function is as follows. RuBisCO catalyzes two reactions: the carboxylation of D-ribulose 1,5-bisphosphate, the primary event in carbon dioxide fixation, as well as the oxidative fragmentation of the pentose substrate. Both reactions occur simultaneously and in competition at the same active site. Although the small subunit is not catalytic it is essential for maximal activity. The sequence is that of Ribulose bisphosphate carboxylase small subunit, chloroplastic 4 from Solanum tuberosum (Potato).